The primary structure comprises 329 residues: Transmembrane protein I329L (329 aa).

Positions 1–31 (MLRVFIFFVFLGSGLAGKVKSPITCKYFISK) are cleaved as a signal peptide. N-linked (GlcNAc...) asparagine; by host glycans are attached at residues Asn32, Asn39, Asn44, Asn58, Asn76, Asn82, Asn101, Asn185, and Asn219. Residues 32-239 (NNTWYKYNVT…NTERYKNCYP (208 aa)) are Extracellular-facing. The chain crosses the membrane as a helical span at residues 240-260 (FVLVSIICSCISSLFLLICLL). The Cytoplasmic segment spans residues 261–329 (RTICKKYSCT…EKKVSCSRRK (69 aa)).

This sequence belongs to the asfivirus I329L family. Post-translationally, highly glycosylated.

The protein resides in the host endoplasmic reticulum membrane. It localises to the host Golgi apparatus membrane. Its function is as follows. Viral TLR3 homolog that probably prevents TLR3 dimerization and subsequent induction of IFN. Inhibits dsRNA-stimulated activation of NF-kB and IRF3. The polypeptide is Transmembrane protein I329L (Ornithodoros (relapsing fever ticks)).